The following is a 283-amino-acid chain: N-terminal Xaa-Pro-Lys N-methyltransferase 2 (283 aa).

S-adenosyl-L-methionine-binding positions include G124, R129, D146, 174 to 175 (LQ), and Q190.

The protein belongs to the methyltransferase superfamily. NTM1 family.

It is found in the nucleus. The catalysed reaction is N-terminal L-alanyl-L-prolyl-L-lysyl-[protein] + S-adenosyl-L-methionine = N-terminal N-methyl-L-alanyl-L-prolyl-L-lysyl-[protein] + S-adenosyl-L-homocysteine + H(+). It carries out the reaction N-terminal L-prolyl-L-prolyl-L-lysyl-[protein] + S-adenosyl-L-methionine = N-terminal N-methyl-L-prolyl-L-prolyl-L-lysyl-[protein] + S-adenosyl-L-homocysteine + H(+). The enzyme catalyses N-terminal L-seryl-L-prolyl-L-lysyl-[protein] + S-adenosyl-L-methionine = N-terminal N-methyl-L-seryl-L-prolyl-L-lysyl-[protein] + S-adenosyl-L-homocysteine + H(+). In terms of biological role, alpha N-methyltransferase that methylates the N-terminus of target proteins containing the N-terminal motif [Ala/Pro/Ser]-Pro-Lys when the initiator Met is cleaved. Specifically catalyzes monomethylation of exposed alpha-amino group of Ala or Ser residue in the [Ala/Ser]-Pro-Lys motif and Pro in the Pro-Pro-Lys motif. Predominantly functions as a mono-methyltransferase but is also able to di-/tri-methylate the GPKRIA peptide and di-methylate the PPKRIA peptide (in vitro). May activate NTMT1 by priming its substrates for trimethylation. The sequence is that of N-terminal Xaa-Pro-Lys N-methyltransferase 2 (Ntmt2) from Rattus norvegicus (Rat).